Reading from the N-terminus, the 242-residue chain is tRNA pseudouridine synthase A (242 aa).

The active-site Nucleophile is Asp51. Tyr107 contacts substrate.

The protein belongs to the tRNA pseudouridine synthase TruA family. Homodimer.

It carries out the reaction uridine(38/39/40) in tRNA = pseudouridine(38/39/40) in tRNA. Functionally, formation of pseudouridine at positions 38, 39 and 40 in the anticodon stem and loop of transfer RNAs. The chain is tRNA pseudouridine synthase A from Helicobacter pylori (strain ATCC 700392 / 26695) (Campylobacter pylori).